Reading from the N-terminus, the 215-residue chain is Interleukin-12 subunit alpha (215 aa).

The signal sequence occupies residues 1–22 (MCSSRCLLFLATLAFLIHLSLA). Cystine bridges form between C33/C106, C60/C192, and C81/C119. N89 carries an N-linked (GlcNAc...) asparagine glycan.

Belongs to the IL-6 superfamily. As to quaternary structure, heterodimer with IL12B; disulfide-linked. This heterodimer is known as interleukin IL-12. Heterodimer with EBI3/IL27B; not disulfide-linked. This heterodimer is known as interleukin IL-35. Interacts with NBR1; this interaction promotes IL-12 secretion.

Its subcellular location is the secreted. In terms of biological role, heterodimerizes with IL12B to form the IL-12 cytokine or with EBI3/IL27B to form the IL-35 cytokine. IL-12 is primarily produced by professional antigen-presenting cells (APCs) such as B-cells and dendritic cells (DCs) as well as macrophages and granulocytes and regulates T-cell and natural killer-cell responses, induces the production of interferon-gamma (IFN-gamma), favors the differentiation of T-helper 1 (Th1) cells and is an important link between innate resistance and adaptive immunity. Mechanistically, exerts its biological effects through a receptor composed of IL12R1 and IL12R2 subunits. Binding to the receptor results in the rapid tyrosine phosphorylation of a number of cellular substrates including the JAK family kinases TYK2 and JAK2. In turn, recruited STAT4 gets phosphorylated and translocates to the nucleus where it regulates cytokine/growth factor responsive genes. As part of IL-35, plays essential roles in maintaining the immune homeostasis of the liver microenvironment and also functions as an immune-suppressive cytokine. Mediates biological events through unconventional receptors composed of IL12RB2 and gp130/IL6ST heterodimers or homodimers. Signaling requires the transcription factors STAT1 and STAT4, which form a unique heterodimer that binds to distinct DNA sites. The polypeptide is Interleukin-12 subunit alpha (IL12A) (Sigmodon hispidus (Hispid cotton rat)).